A 671-amino-acid chain; its full sequence is K(+)-insensitive pyrophosphate-energized proton pump (671 aa).

The next 5 helical transmembrane spans lie at 3–23, 57–77, 79–99, 128–148, and 156–176; these read SLIF…AFFA, TIAV…DDGL, IAIG…IGMS, AVTG…FYIL, and VGFG…GGIF. A substrate-binding site is contributed by lysine 178. The Mg(2+) site is built by aspartate 181, aspartate 185, asparagine 208, and aspartate 211. The next 6 membrane-spanning stretches (helical) occupy residues 223–243, 249–269, 285–305, 310–330, 366–386, and 391–411; these read LFET…LIIG, ILYP…SVFF, GVGG…NSLM, LFYA…ITEY, LVPT…VGGA, and IGLY…GMIV. Residue aspartate 421 participates in Mg(2+) binding. The next 4 membrane-spanning stretches (helical) occupy residues 452-472, 490-510, 558-578, and 580-600; these read AVTK…LFAD, VVLA…AVTM, MAMP…ILGP, and ALAG…LMMD. Aspartate 607, aspartate 633, and aspartate 637 together coordinate Ca(2+). Lysine 640 contacts substrate. A helical transmembrane segment spans residues 646–666; the sequence is ALNALIKVVNMVAILFSSLII.

It belongs to the H(+)-translocating pyrophosphatase (TC 3.A.10) family. K(+)-insensitive subfamily. As to quaternary structure, homodimer. It depends on Mg(2+) as a cofactor.

The protein resides in the cell membrane. It catalyses the reaction diphosphate + H2O + H(+)(in) = 2 phosphate + 2 H(+)(out). Functionally, proton pump that utilizes the energy of pyrophosphate hydrolysis as the driving force for proton movement across the membrane. Generates a proton motive force. This is K(+)-insensitive pyrophosphate-energized proton pump from Methanosarcina acetivorans (strain ATCC 35395 / DSM 2834 / JCM 12185 / C2A).